The chain runs to 120 residues: A-type ATP synthase subunit F (120 aa).

This sequence belongs to the V-ATPase F subunit family. As to quaternary structure, has multiple subunits with at least A(3), B(3), C, D, E, F, H, I and proteolipid K(x).

It is found in the cell membrane. Its function is as follows. Component of the A-type ATP synthase that produces ATP from ADP in the presence of a proton gradient across the membrane. The polypeptide is A-type ATP synthase subunit F (Halobacterium salinarum (strain ATCC 29341 / DSM 671 / R1)).